Here is a 459-residue protein sequence, read N- to C-terminus: Exodeoxyribonuclease 7 large subunit (459 aa).

Belongs to the XseA family. In terms of assembly, heterooligomer composed of large and small subunits.

The protein localises to the cytoplasm. It carries out the reaction Exonucleolytic cleavage in either 5'- to 3'- or 3'- to 5'-direction to yield nucleoside 5'-phosphates.. In terms of biological role, bidirectionally degrades single-stranded DNA into large acid-insoluble oligonucleotides, which are then degraded further into small acid-soluble oligonucleotides. This Pseudomonas entomophila (strain L48) protein is Exodeoxyribonuclease 7 large subunit.